Consider the following 446-residue polypeptide: Zinc finger protein BALDIBIS (446 aa).

The segment at 20–53 (EHIAPNPNPNPNPTSSNSAKRKRNLPGNPDPDAE) is disordered. Ser58 carries the phosphoserine modification. C2H2-type zinc fingers lie at residues 68–90 (FICE…RRGH) and 110–140 (YICP…SRKH). The Nuclear localization signal signature appears at 132-139 (IKKHFSRK). The segment at 145–168 (WKCDKCSKKYAVMSDWKAHSKICG) adopts a C2H2-type 2; degenerate zinc-finger fold. Residues Cys147, Cys150, His163, Cys167, Cys174, Cys176, His189, and Cys193 each coordinate Zn(2+). The segment at 172-195 (YRCDCGTLFSRKDSFITHRAFCDA) adopts a CCHC-type 2; atypical zinc-finger fold. Residues 182–194 (RKDSFITHRAFCD) form an SHR-binding region. The disordered stretch occupies residues 425–446 (HNLPDSSPPASTDGTPTADMNQ). Polar residues predominate over residues 427 to 446 (LPDSSPPASTDGTPTADMNQ).

As to quaternary structure, binds to RGA and SCL3 competitively in the nucleus. Expressed in roots, especially in vascular initials, cortex, endodermis, and quiescent center (QC).

Its subcellular location is the nucleus. In terms of biological role, transcription factor that, together with JKD, regulates tissue boundaries and asymmetric cell division in roots by a rapid up-regulation of 'SCARECROW' (SCR), thus controlling the nuclear localization of 'SHORT-ROOT' (SHR) and restricting its action. Confines CYCD6 expression to the cortex-endodermis initial/daughter (CEI/CEID) tissues. Binds DNA via its zinc fingers. Recognizes and binds to SCL3 promoter sequence 5'-AGACAA-3' to promote its expression when in complex with RGA. This Arabidopsis thaliana (Mouse-ear cress) protein is Zinc finger protein BALDIBIS.